Consider the following 96-residue polypeptide: Small ribosomal subunit protein bS6 (96 aa).

The protein belongs to the bacterial ribosomal protein bS6 family.

In terms of biological role, binds together with bS18 to 16S ribosomal RNA. This is Small ribosomal subunit protein bS6 from Streptococcus thermophilus (strain ATCC BAA-491 / LMD-9).